A 92-amino-acid polypeptide reads, in one-letter code: Small ribosomal subunit protein bS20 (92 aa).

Residues 1-24 are disordered; sequence MANTTSAKKATRKIARRTDVNKAR.

Belongs to the bacterial ribosomal protein bS20 family.

Its function is as follows. Binds directly to 16S ribosomal RNA. The protein is Small ribosomal subunit protein bS20 of Rhizobium etli (strain ATCC 51251 / DSM 11541 / JCM 21823 / NBRC 15573 / CFN 42).